The primary structure comprises 100 residues: Urease subunit gamma (100 aa).

Belongs to the urease gamma subunit family. Heterotrimer of UreA (gamma), UreB (beta) and UreC (alpha) subunits. Three heterotrimers associate to form the active enzyme.

The protein resides in the cytoplasm. It catalyses the reaction urea + 2 H2O + H(+) = hydrogencarbonate + 2 NH4(+). The protein operates within nitrogen metabolism; urea degradation; CO(2) and NH(3) from urea (urease route): step 1/1. The polypeptide is Urease subunit gamma (Corynebacterium urealyticum (strain ATCC 43042 / DSM 7109)).